Here is a 339-residue protein sequence, read N- to C-terminus: Phenylalanine--tRNA ligase alpha subunit (339 aa).

Glu250 contacts Mg(2+).

Belongs to the class-II aminoacyl-tRNA synthetase family. Phe-tRNA synthetase alpha subunit type 1 subfamily. In terms of assembly, tetramer of two alpha and two beta subunits. Mg(2+) is required as a cofactor.

It localises to the cytoplasm. It carries out the reaction tRNA(Phe) + L-phenylalanine + ATP = L-phenylalanyl-tRNA(Phe) + AMP + diphosphate + H(+). The chain is Phenylalanine--tRNA ligase alpha subunit from Bacteroides fragilis (strain ATCC 25285 / DSM 2151 / CCUG 4856 / JCM 11019 / LMG 10263 / NCTC 9343 / Onslow / VPI 2553 / EN-2).